A 351-amino-acid polypeptide reads, in one-letter code: Nicotinate-nucleotide--dimethylbenzimidazole phosphoribosyltransferase (351 aa).

Glu317 functions as the Proton acceptor in the catalytic mechanism.

This sequence belongs to the CobT family.

The catalysed reaction is 5,6-dimethylbenzimidazole + nicotinate beta-D-ribonucleotide = alpha-ribazole 5'-phosphate + nicotinate + H(+). It functions in the pathway nucleoside biosynthesis; alpha-ribazole biosynthesis; alpha-ribazole from 5,6-dimethylbenzimidazole: step 1/2. Catalyzes the synthesis of alpha-ribazole-5'-phosphate from nicotinate mononucleotide (NAMN) and 5,6-dimethylbenzimidazole (DMB). This is Nicotinate-nucleotide--dimethylbenzimidazole phosphoribosyltransferase from Pseudomonas putida (strain ATCC 700007 / DSM 6899 / JCM 31910 / BCRC 17059 / LMG 24140 / F1).